Consider the following 325-residue polypeptide: tRNA(Ile)-lysidine synthase (325 aa).

35–40 (SGGQDS) contributes to the ATP binding site.

This sequence belongs to the tRNA(Ile)-lysidine synthase family.

Its subcellular location is the cytoplasm. The enzyme catalyses cytidine(34) in tRNA(Ile2) + L-lysine + ATP = lysidine(34) in tRNA(Ile2) + AMP + diphosphate + H(+). In terms of biological role, ligates lysine onto the cytidine present at position 34 of the AUA codon-specific tRNA(Ile) that contains the anticodon CAU, in an ATP-dependent manner. Cytidine is converted to lysidine, thus changing the amino acid specificity of the tRNA from methionine to isoleucine. The polypeptide is tRNA(Ile)-lysidine synthase (Gloeobacter violaceus (strain ATCC 29082 / PCC 7421)).